The chain runs to 650 residues: Leukocyte immunoglobulin-like receptor subfamily B member 1 (650 aa).

The first 23 residues, 1–23 (MTPILTVLICLGLSLGPRTHVQA), serve as a signal peptide directing secretion. Residues 24 to 461 (GHLPKPTLWA…QSGLGRHLGV (438 aa)) are Extracellular-facing. Ig-like C2-type domains follow at residues 27-115 (PKPT…DPLE), 116-221 (LVVT…LVLG), 222-312 (VSKK…APSD), and 313-409 (PLDI…YLLT). Intrachain disulfides connect Cys49/Cys98, Cys145/Cys197, Cys157/Cys167, and Cys246/Cys297. Asn281, Asn302, and Asn341 each carry an N-linked (GlcNAc...) asparagine glycan. An intrachain disulfide couples Cys346 to Cys397. The segment at 415–451 (LELVVSGPSGGPSSPTTGPTSTSGPEDQPLTPTGSDP) is disordered. The span at 425–439 (GPSSPTTGPTSTSGP) shows a compositional bias: low complexity. The helical transmembrane segment at 462-482 (VIGILVAVILLLLLLLLLFLI) threads the bilayer. The Cytoplasmic segment spans residues 483 to 650 (LRHRRQGKHW…PSIYATLAIH (168 aa)). Residues 491–524 (HWTSTQRKADFQHPAGAVGPEPTDRGLQWRSSPA) form a disordered region. 2 consecutive short sequence motifs (ITIM motif) follow at residues 531–536 (NLYAAV) and 560–565 (VTYAEV). Tyr533 carries the post-translational modification Phosphotyrosine. The tract at residues 563 to 650 (AEVKHSRPRR…PSIYATLAIH (88 aa)) is disordered. Composition is skewed to basic and acidic residues over residues 564–574 (EVKHSRPRREM) and 586–600 (LDTKDRQAEEDRQMD). Short sequence motifs (ITIM motif) lie at residues 612 to 617 (VTYAQL) and 642 to 647 (SIYATL). Phosphotyrosine occurs at positions 614 and 644.

In terms of assembly, binds PTPN6 when phosphorylated. Binds FCER1A and FCGR1A. Interacts with human cytomegalovirus/HHV-5 protein UL18. Interacts with peptide-bound HLA-G-B2M complex. Interacts with peptide-bound HLA-F-B2M complex but not with peptide-free HLA-F open conformer. It does not probe the peptide sequence directly. Post-translationally, phosphorylated on tyrosine residues. Dephosphorylated by PTPN6. In terms of tissue distribution, expressed in B cells, monocytes and various dendritic cell (DC) subsets including myeloid, plasmacytoid and tolerogenic DCs (at protein level). Expressed in decidual macrophages (at protein level). Expressed in decidual NK cells (at protein level).

The protein resides in the cell membrane. It is found in the secreted. In terms of biological role, receptor for class I MHC antigens. Recognizes a broad spectrum of HLA-A, HLA-B, HLA-C, HLA-G and HLA-F alleles. Receptor for H301/UL18, a human cytomegalovirus class I MHC homolog. Ligand binding results in inhibitory signals and down-regulation of the immune response. Engagement of LILRB1 present on natural killer cells or T-cells by class I MHC molecules protects the target cells from lysis. Interaction with HLA-B or HLA-E leads to inhibition of FCER1A signaling and serotonin release. Inhibits FCGR1A-mediated phosphorylation of cellular proteins and mobilization of intracellular calcium ions. Recognizes HLA-G in complex with B2M/beta-2 microglobulin and a nonamer self-peptide. Upon interaction with peptide-bound HLA-G-B2M complex, triggers secretion of growth-promoting factors by decidual NK cells. Reprograms B cells toward an immune suppressive phenotype. This Homo sapiens (Human) protein is Leukocyte immunoglobulin-like receptor subfamily B member 1.